The sequence spans 134 residues: Cytochrome c-550 (134 aa).

At glutamine 1 the chain carries Pyrrolidone carboxylic acid. Residues cysteine 15, cysteine 18, histidine 19, and methionine 100 each contribute to the heme c site.

Post-translationally, binds 1 heme c group covalently per subunit.

Electron donor for nitrous-oxide reductase. This chain is Cytochrome c-550, found in Paracoccus pantotrophus (Thiosphaera pantotropha).